The chain runs to 115 residues: UPF0102 protein NMA0341 (115 aa).

The protein belongs to the UPF0102 family.

The chain is UPF0102 protein NMA0341 from Neisseria meningitidis serogroup A / serotype 4A (strain DSM 15465 / Z2491).